Consider the following 484-residue polypeptide: Aspartyl/glutamyl-tRNA(Asn/Gln) amidotransferase subunit B (484 aa).

Belongs to the GatB/GatE family. GatB subfamily. As to quaternary structure, heterotrimer of A, B and C subunits.

It catalyses the reaction L-glutamyl-tRNA(Gln) + L-glutamine + ATP + H2O = L-glutaminyl-tRNA(Gln) + L-glutamate + ADP + phosphate + H(+). It carries out the reaction L-aspartyl-tRNA(Asn) + L-glutamine + ATP + H2O = L-asparaginyl-tRNA(Asn) + L-glutamate + ADP + phosphate + 2 H(+). Functionally, allows the formation of correctly charged Asn-tRNA(Asn) or Gln-tRNA(Gln) through the transamidation of misacylated Asp-tRNA(Asn) or Glu-tRNA(Gln) in organisms which lack either or both of asparaginyl-tRNA or glutaminyl-tRNA synthetases. The reaction takes place in the presence of glutamine and ATP through an activated phospho-Asp-tRNA(Asn) or phospho-Glu-tRNA(Gln). The sequence is that of Aspartyl/glutamyl-tRNA(Asn/Gln) amidotransferase subunit B from Cupriavidus metallidurans (strain ATCC 43123 / DSM 2839 / NBRC 102507 / CH34) (Ralstonia metallidurans).